A 96-amino-acid polypeptide reads, in one-letter code: Co-chaperonin GroES (96 aa).

Belongs to the GroES chaperonin family. In terms of assembly, heptamer of 7 subunits arranged in a ring. Interacts with the chaperonin GroEL.

Its subcellular location is the cytoplasm. Its function is as follows. Together with the chaperonin GroEL, plays an essential role in assisting protein folding. The GroEL-GroES system forms a nano-cage that allows encapsulation of the non-native substrate proteins and provides a physical environment optimized to promote and accelerate protein folding. GroES binds to the apical surface of the GroEL ring, thereby capping the opening of the GroEL channel. This Haemophilus influenzae (strain PittEE) protein is Co-chaperonin GroES.